A 96-amino-acid chain; its full sequence is Protein RnfH (96 aa).

This sequence belongs to the UPF0125 (RnfH) family.

In Cronobacter sakazakii (strain ATCC BAA-894) (Enterobacter sakazakii), this protein is Protein RnfH.